Reading from the N-terminus, the 203-residue chain is MGAEKITSKIVEDANKNAEKILAEALNEKEAILTEAKEEASKKEQAIAKKGEKDAEMTKNRILAEARLSAKKKLLEEREKTIQLTLEKLEEDLVKLPQKEEYKDILLKLIISGVYSVGGGELELLLNKKDFEVIDDSTLWALEKEMEDRLKKVTVLKKGEAKSIIGGCIIKTADKTKVSDNSLEATFERNLDSVRAKIAEMLF.

It belongs to the V-ATPase E subunit family. In terms of assembly, has multiple subunits with at least A(3), B(3), C, D, E, F, H, I and proteolipid K(x).

The protein resides in the cell membrane. In terms of biological role, component of the A-type ATP synthase that produces ATP from ADP in the presence of a proton gradient across the membrane. The chain is A-type ATP synthase subunit E from Methanococcus maripaludis (strain C7 / ATCC BAA-1331).